Reading from the N-terminus, the 243-residue chain is Adenylate dimethylallyltransferase (243 aa).

It belongs to the isopentenyl transferase family.

It catalyses the reaction dimethylallyl diphosphate + AMP = N(6)-(dimethylallyl)adenosine 5'-phosphate + diphosphate. Its function is as follows. Transfers dimethylallyl groups to AMP as part of the biosynthesis of cytokinin phytohormones. The polypeptide is Adenylate dimethylallyltransferase (tzs) (Rhizobium rhizogenes (Agrobacterium rhizogenes)).